The primary structure comprises 237 residues: MKKLAEFYRGKAKTVYHTSHPSFLILEFRNDISILDGQCIKQFDRKGMINNKFNFFIMNKLAELGIPTQIEQLLSDNETLVKKLDMIPVECVIRNRAAGSLVRRLGIEEGQILNPPLLELFFKNDSMHDPIINASYCTTFNLVSDTNLVRMQQLTKHANNILTKIFDKKGIILVDFKLEFGLFNNQIILGDEFSPDVSRLWDKKTLKKMDKDRLRQNLGGVIEAYEEVAIRIGVSLT.

This sequence belongs to the SAICAR synthetase family.

The enzyme catalyses 5-amino-1-(5-phospho-D-ribosyl)imidazole-4-carboxylate + L-aspartate + ATP = (2S)-2-[5-amino-1-(5-phospho-beta-D-ribosyl)imidazole-4-carboxamido]succinate + ADP + phosphate + 2 H(+). Its pathway is purine metabolism; IMP biosynthesis via de novo pathway; 5-amino-1-(5-phospho-D-ribosyl)imidazole-4-carboxamide from 5-amino-1-(5-phospho-D-ribosyl)imidazole-4-carboxylate: step 1/2. The chain is Phosphoribosylaminoimidazole-succinocarboxamide synthase from Baumannia cicadellinicola subsp. Homalodisca coagulata.